The following is a 106-amino-acid chain: Thiosulfate sulfurtransferase GlpE (106 aa).

One can recognise a Rhodanese domain in the interval 17-105 (EQNEARLVDI…SYRAELPVIA (89 aa)). The active-site Cysteine persulfide intermediate is Cys-65.

This sequence belongs to the GlpE family.

The protein resides in the cytoplasm. It catalyses the reaction thiosulfate + hydrogen cyanide = thiocyanate + sulfite + 2 H(+). The enzyme catalyses thiosulfate + [thioredoxin]-dithiol = [thioredoxin]-disulfide + hydrogen sulfide + sulfite + 2 H(+). Functionally, transferase that catalyzes the transfer of sulfur from thiosulfate to thiophilic acceptors such as cyanide or dithiols. May function in a CysM-independent thiosulfate assimilation pathway by catalyzing the conversion of thiosulfate to sulfite, which can then be used for L-cysteine biosynthesis. This chain is Thiosulfate sulfurtransferase GlpE, found in Vibrio atlanticus (strain LGP32) (Vibrio splendidus (strain Mel32)).